Reading from the N-terminus, the 466-residue chain is Uronate isomerase (466 aa).

This sequence belongs to the metallo-dependent hydrolases superfamily. Uronate isomerase family.

It catalyses the reaction D-glucuronate = D-fructuronate. It carries out the reaction aldehydo-D-galacturonate = keto-D-tagaturonate. Its pathway is carbohydrate metabolism; pentose and glucuronate interconversion. The chain is Uronate isomerase from Streptococcus agalactiae serotype V (strain ATCC BAA-611 / 2603 V/R).